The sequence spans 448 residues: Potassium/proton antiporter CemA (448 aa).

A run of 4 helical transmembrane segments spans residues 224–244 (ALASIQYIGCLLFILSIISML), 325–345 (IILHLLTDIISIVTLIVLFII), 373–393 (ILLLTDLCIGFHSPHGWEIVI), and 408–428 (IISCFVSTFPVILDTVFKYWI).

Belongs to the CemA family.

The protein localises to the plastid. The protein resides in the chloroplast inner membrane. The catalysed reaction is K(+)(in) + H(+)(out) = K(+)(out) + H(+)(in). In terms of biological role, contributes to K(+)/H(+) antiport activity by supporting proton efflux to control proton extrusion and homeostasis in chloroplasts in a light-dependent manner to modulate photosynthesis. Prevents excessive induction of non-photochemical quenching (NPQ) under continuous-light conditions. Indirectly promotes efficient inorganic carbon uptake into chloroplasts. In Angiopteris evecta (Mule's foot fern), this protein is Potassium/proton antiporter CemA.